The following is an 828-amino-acid chain: Molybdenum cofactor sulfurase (828 aa).

Lysine 239 carries the N6-(pyridoxal phosphate)lysine modification. Cysteine 402 is a catalytic residue. Residues 638–682 form a disordered region; that stretch reads TRYTRRSLHSRSSTAALRRQRPVEESSMPGSFPSDTPLSRTPEPP. Residues 652–825 enclose the MOSC domain; it reads AALRRQRPVE…VMVGDVVRPW (174 aa).

The protein belongs to the class-V pyridoxal-phosphate-dependent aminotransferase family. MOCOS subfamily. Pyridoxal 5'-phosphate is required as a cofactor.

It catalyses the reaction Mo-molybdopterin + L-cysteine + AH2 = thio-Mo-molybdopterin + L-alanine + A + H2O. In terms of biological role, sulfurates the molybdenum cofactor. Sulfation of molybdenum is essential for xanthine dehydrogenase (XDH) and aldehyde oxidase (ADO) enzymes in which molybdenum cofactor is liganded by 1 oxygen and 1 sulfur atom in active form. This is Molybdenum cofactor sulfurase from Aspergillus terreus (strain NIH 2624 / FGSC A1156).